A 287-amino-acid polypeptide reads, in one-letter code: Glycine--tRNA ligase alpha subunit (287 aa).

It belongs to the class-II aminoacyl-tRNA synthetase family. Tetramer of two alpha and two beta subunits.

It is found in the cytoplasm. It catalyses the reaction tRNA(Gly) + glycine + ATP = glycyl-tRNA(Gly) + AMP + diphosphate. The sequence is that of Glycine--tRNA ligase alpha subunit from Campylobacter jejuni subsp. doylei (strain ATCC BAA-1458 / RM4099 / 269.97).